A 368-amino-acid polypeptide reads, in one-letter code: Chaperone protein DnaJ (368 aa).

In terms of domain architecture, J spans 5 to 70 (DYYQVLGVPR…KKRKLYDTHG (66 aa)). Residues 124-201 (GVERQIQIPT…CNGAGRVEDH (78 aa)) form a CR-type zinc finger. The Zn(2+) site is built by cysteine 137, cysteine 140, cysteine 153, cysteine 156, cysteine 175, cysteine 178, cysteine 189, and cysteine 192. CXXCXGXG motif repeat units lie at residues 137–144 (CTHCHGSG), 153–160 (CGTCRGSG), 175–182 (CPHCGGRG), and 189–196 (CKVCNGAG).

This sequence belongs to the DnaJ family. As to quaternary structure, homodimer. It depends on Zn(2+) as a cofactor.

The protein resides in the cytoplasm. Its function is as follows. Participates actively in the response to hyperosmotic and heat shock by preventing the aggregation of stress-denatured proteins and by disaggregating proteins, also in an autonomous, DnaK-independent fashion. Unfolded proteins bind initially to DnaJ; upon interaction with the DnaJ-bound protein, DnaK hydrolyzes its bound ATP, resulting in the formation of a stable complex. GrpE releases ADP from DnaK; ATP binding to DnaK triggers the release of the substrate protein, thus completing the reaction cycle. Several rounds of ATP-dependent interactions between DnaJ, DnaK and GrpE are required for fully efficient folding. Also involved, together with DnaK and GrpE, in the DNA replication of plasmids through activation of initiation proteins. The sequence is that of Chaperone protein DnaJ from Xylella fastidiosa (strain M23).